The sequence spans 583 residues: 2-succinyl-5-enolpyruvyl-6-hydroxy-3-cyclohexene-1-carboxylate synthase (583 aa).

Belongs to the TPP enzyme family. MenD subfamily. In terms of assembly, homodimer. It depends on Mg(2+) as a cofactor. Requires Mn(2+) as cofactor. Thiamine diphosphate is required as a cofactor.

It carries out the reaction isochorismate + 2-oxoglutarate + H(+) = 5-enolpyruvoyl-6-hydroxy-2-succinyl-cyclohex-3-ene-1-carboxylate + CO2. It functions in the pathway quinol/quinone metabolism; 1,4-dihydroxy-2-naphthoate biosynthesis; 1,4-dihydroxy-2-naphthoate from chorismate: step 2/7. Its pathway is cofactor biosynthesis; phylloquinone biosynthesis. In terms of biological role, catalyzes the thiamine diphosphate-dependent decarboxylation of 2-oxoglutarate and the subsequent addition of the resulting succinic semialdehyde-thiamine pyrophosphate anion to isochorismate to yield 2-succinyl-5-enolpyruvyl-6-hydroxy-3-cyclohexene-1-carboxylate (SEPHCHC). The polypeptide is 2-succinyl-5-enolpyruvyl-6-hydroxy-3-cyclohexene-1-carboxylate synthase (Trichormus variabilis (strain ATCC 29413 / PCC 7937) (Anabaena variabilis)).